We begin with the raw amino-acid sequence, 184 residues long: Large ribosomal subunit protein uL6 (184 aa).

It belongs to the universal ribosomal protein uL6 family. Part of the 50S ribosomal subunit.

Its function is as follows. This protein binds to the 23S rRNA, and is important in its secondary structure. It is located near the subunit interface in the base of the L7/L12 stalk, and near the tRNA binding site of the peptidyltransferase center. The protein is Large ribosomal subunit protein uL6 of Mycoplasma genitalium (strain ATCC 33530 / DSM 19775 / NCTC 10195 / G37) (Mycoplasmoides genitalium).